The following is a 500-amino-acid chain: NAD(P)H-quinone oxidoreductase chain 4, chloroplastic (500 aa).

Transmembrane regions (helical) follow at residues phenylalanine 4–leucine 24, isoleucine 37–leucine 57, isoleucine 87–valine 107, leucine 113–serine 130, leucine 134–methionine 154, phenylalanine 167–leucine 187, alanine 208–isoleucine 228, histidine 242–valine 262, alanine 272–alanine 292, isoleucine 305–aspartate 325, glycine 330–glycine 350, leucine 386–threonine 406, isoleucine 416–methionine 436, and leucine 462–valine 482.

The protein belongs to the complex I subunit 4 family.

It localises to the plastid. Its subcellular location is the chloroplast thylakoid membrane. The enzyme catalyses a plastoquinone + NADH + (n+1) H(+)(in) = a plastoquinol + NAD(+) + n H(+)(out). It carries out the reaction a plastoquinone + NADPH + (n+1) H(+)(in) = a plastoquinol + NADP(+) + n H(+)(out). This chain is NAD(P)H-quinone oxidoreductase chain 4, chloroplastic, found in Vitis vinifera (Grape).